We begin with the raw amino-acid sequence, 749 residues long: Patatin-like phospholipase domain-containing protein An01g04180 (749 aa).

Positions 1–21 are disordered; the sequence is MNGAEKSAAGDTYDPSTIPDY. A helical membrane pass occupies residues 87-107; sequence WPFLFTVFGWITALAFAYTLT. In terms of domain architecture, PNPLA spans 277 to 468; that stretch reads LCLSGGATFA…RTDIPIKALN (192 aa). Residues 308–312 carry the GXSXG motif; the sequence is GTSGG. Residue serine 310 is the Nucleophile of the active site. The active-site Proton acceptor is the aspartate 455. The tract at residues 619-726 is disordered; it reads AGGRPISPAP…STGSSIFEEV (108 aa). Positions 649-664 are enriched in basic and acidic residues; it reads PLNERLDHNLPERRGD. A compositionally biased stretch (low complexity) spans 685-707; the sequence is SLSENSSNESAARPSSSSSSSRL.

It belongs to the PLPL family.

The protein resides in the membrane. Probable lipid hydrolase. The sequence is that of Patatin-like phospholipase domain-containing protein An01g04180 from Aspergillus niger (strain ATCC MYA-4892 / CBS 513.88 / FGSC A1513).